Here is a 298-residue protein sequence, read N- to C-terminus: Peroxisomal 2,4-dienoyl-CoA reductase [(3E)-enoyl-CoA-producing] (298 aa).

19-24 (GGGSGI) provides a ligand contact to NADP(+). Arg-44 lines the substrate pocket. Residue Asp-69 participates in NADP(+) binding. Residues Arg-71, Phe-101, and 109–111 (SPN) contribute to the substrate site. NADP(+)-binding positions include Lys-173 and 200–206 (PGPIGGT). A disordered region spans residues 279 to 298 (SRAVEKRSRAKPVGLPTSKL). Residues 296–298 (SKL) carry the Microbody targeting signal motif.

It belongs to the short-chain dehydrogenases/reductases (SDR) family. 2,4-dienoyl-CoA reductase subfamily.

The protein localises to the peroxisome. The enzyme catalyses a (2E,4Z)-dienoyl-CoA + NADPH + H(+) = a 4,5-saturated-(3E)-enoyl-CoA + NADP(+). The catalysed reaction is a (2E,4E)-dienoyl-CoA + NADPH + H(+) = a 4,5-saturated-(3E)-enoyl-CoA + NADP(+). Its function is as follows. Auxiliary enzyme of beta-oxidation. Participates in the degradation of unsaturated fatty enoyl-CoA esters having double bonds in both even- and odd-numbered positions in peroxisome. Catalyzes the NADP-dependent reduction of 2,4-dienoyl-CoA to yield trans-3-enoyl-CoA. The chain is Peroxisomal 2,4-dienoyl-CoA reductase [(3E)-enoyl-CoA-producing] from Arabidopsis thaliana (Mouse-ear cress).